A 492-amino-acid polypeptide reads, in one-letter code: MDAMKYHDLRDFLTLLEQQGELKRITLPVDPHLEITEIADRTLRAGGPALLFENPKGYAMPVLCNLFGTPKRVAMGMGQDDVSALREVGKLLAFLKEPEPPKGFRDLFDKLPQFKQVLNMPTKRLRGAPCQQKIASGDDVDLTRLPVMTCWPDDAAPLITWGLTVTRGPHKERQNLGIYRQQLIGKNKLIMRWLSHRGGALDFQEWLAARPGERFPVSVALGADPATILGAVTPVPDTLSEYAFAGLLRGTKTEVVKCLSNDLEVPASAEIILEGYIEPGEMAPEGPYGDHTGYYNEVDSFPVFTVTHITQREDAIYHSTYTGRPPDEPAVLGVALNEVFVPILQKQFPEIVDFYLPPEGCSYRLAVVTMKKQYAGHAKRVMMGVWSFLRQFMYTKFVIVCDDDVNARDWNDVIWAITTRMDPARDTVLVENTPIDYLDFASPVSGLGSKMGLDATNKWPGETQREWGRPIVKDPEVTARIDAIWDELAIFK.

Residue asparagine 175 coordinates Mn(2+). Prenylated FMN is bound by residues 178–180, 192–194, and 197–198; these read IYR, RWL, and RG. Glutamate 241 is a Mn(2+) binding site. Aspartate 290 acts as the Proton donor in catalysis.

This sequence belongs to the UbiD family. In terms of assembly, homohexamer. It depends on prenylated FMN as a cofactor. Mn(2+) serves as cofactor.

Its subcellular location is the cell membrane. It catalyses the reaction a 4-hydroxy-3-(all-trans-polyprenyl)benzoate + H(+) = a 2-(all-trans-polyprenyl)phenol + CO2. It functions in the pathway cofactor biosynthesis; ubiquinone biosynthesis. Functionally, catalyzes the decarboxylation of 3-octaprenyl-4-hydroxy benzoate to 2-octaprenylphenol, an intermediate step in ubiquinone biosynthesis. The sequence is that of 3-octaprenyl-4-hydroxybenzoate carboxy-lyase from Salmonella typhimurium (strain LT2 / SGSC1412 / ATCC 700720).